The chain runs to 508 residues: Cyclin-A1-1 (508 aa).

The span at 1 to 28 (MSSNLAASRRSSSSSSVAAAAAAKRPAV) shows a compositional bias: low complexity. Disordered stretches follow at residues 1 to 40 (MSSNLAASRRSSSSSSVAAAAAAKRPAVGEGGGGGGGKAA) and 82 to 125 (VKKG…ESVL). Residues 29–39 (GEGGGGGGGKA) are compositionally biased toward gly residues. A compositionally biased stretch (low complexity) spans 98–111 (ASAVKSASAKPAPA).

This sequence belongs to the cyclin family. Cyclin AB subfamily. Expressed in the dividing region of the root cap and root apex. Expressed in the intercalary meristem of internodes and in adventitious roots under submergence conditions.

Involved in the control of the cell cycle at the G2/M (mitosis) transition. The chain is Cyclin-A1-1 (CYCA1-1) from Oryza sativa subsp. japonica (Rice).